Reading from the N-terminus, the 137-residue chain is Allergen Ste b 1 (137 aa).

The signal sequence occupies residues 1–18; that stretch reads ALFAAAGLAAAAPFETRQ. In terms of domain architecture, AA1-like spans 28–137; it reads QGDYVWKISE…PKDVICQGAS (110 aa). Intrachain disulfides connect Cys67–Cys82 and Cys121–Cys133.

This sequence belongs to the ALTA1 family. As to quaternary structure, homodimer; disulfide-linked.

It localises to the secreted. The sequence is that of Allergen Ste b 1 (alta1) from Stemphylium botryosum (Black stalk rot fungus).